The following is a 213-amino-acid chain: Mite allergen Der f 7 (213 aa).

Positions 1–17 are cleaved as a signal peptide; that stretch reads MMKFLLIAAVAFVAVSA. An N-linked (GlcNAc...) asparagine glycan is attached at N151.

Belongs to the mite group 7 allergen family.

It is found in the secreted. The sequence is that of Mite allergen Der f 7 (DERF7) from Dermatophagoides farinae (American house dust mite).